The following is a 133-amino-acid chain: Ribosome-binding factor A (133 aa).

This sequence belongs to the RbfA family. As to quaternary structure, monomer. Binds 30S ribosomal subunits, but not 50S ribosomal subunits or 70S ribosomes.

The protein localises to the cytoplasm. Its function is as follows. One of several proteins that assist in the late maturation steps of the functional core of the 30S ribosomal subunit. Associates with free 30S ribosomal subunits (but not with 30S subunits that are part of 70S ribosomes or polysomes). Required for efficient processing of 16S rRNA. May interact with the 5'-terminal helix region of 16S rRNA. This Acinetobacter baumannii (strain AB307-0294) protein is Ribosome-binding factor A.